The chain runs to 414 residues: Probable acetyl-CoA acetyltransferase (414 aa).

Cys-110 serves as the catalytic Acyl-thioester intermediate. Residues Tyr-205, 244–246 (KVL), and Lys-249 each bind CoA. Position 205 (Tyr-205) interacts with K(+). Residues Ala-266 and Ala-268 each coordinate K(+). Ser-269 lines the CoA pocket. A K(+)-binding site is contributed by Val-366. Residues His-370 and Cys-400 each act as proton acceptor in the active site.

It belongs to the thiolase-like superfamily. Thiolase family.

The enzyme catalyses 2 acetyl-CoA = acetoacetyl-CoA + CoA. The protein is Probable acetyl-CoA acetyltransferase of Dictyostelium discoideum (Social amoeba).